Reading from the N-terminus, the 387-residue chain is MKQAVIVDCIRTPMGRSKAGVFRNVRAETLSAELMKGLLLRNPQLDPNLIEDVIWGCVQQTLEQGFNIARNASLLAGIPKTAGAVTVNRLCGSSMDAIHQAARAIMTGMGDTFIIGGVEHMGHVPMSHGVDFHPGLANKVAKASGMMGLTAEMLGKLHGITREQQDAFAVRSHQRAYAATVEGRFAKEIYGIEGHDANGALIKVLQDEVIRPETTMESLAALRPVFDPVNGTVTAGTSSALSDGASAMLIMEESKARALGLPIRARIRSMAVAGCDAAIMGYGPVPATQKALARAGITVADLDVIELNEAFAAQSLPCVKDLGLADVVDDKINLNGGAIALGHPLGCSGARISTTLINLMEDKDATLGLATMCIGLGQGIATVFERV.

The active-site Acyl-thioester intermediate is the cysteine 91. Active-site proton acceptor residues include histidine 343 and cysteine 373.

Belongs to the thiolase-like superfamily. Thiolase family. As to quaternary structure, heterotetramer of two alpha chains (FadB) and two beta chains (FadA).

It is found in the cytoplasm. The enzyme catalyses an acyl-CoA + acetyl-CoA = a 3-oxoacyl-CoA + CoA. Its pathway is lipid metabolism; fatty acid beta-oxidation. Catalyzes the final step of fatty acid oxidation in which acetyl-CoA is released and the CoA ester of a fatty acid two carbons shorter is formed. This chain is 3-ketoacyl-CoA thiolase, found in Shewanella baltica (strain OS155 / ATCC BAA-1091).